A 263-amino-acid chain; its full sequence is Small ribosomal subunit protein eS1 (263 aa).

The segment covering 236-254 (GDGKGGSDEPGARVDRPEG) has biased composition (basic and acidic residues). The tract at residues 236-263 (GDGKGGSDEPGARVDRPEGYEPPVQETV) is disordered.

Belongs to the eukaryotic ribosomal protein eS1 family. As to quaternary structure, component of the small ribosomal subunit. Mature ribosomes consist of a small (40S) and a large (60S) subunit. The 40S subunit contains about 33 different proteins and 1 molecule of RNA (18S). The 60S subunit contains about 49 different proteins and 3 molecules of RNA (28S, 5.8S and 5S).

The protein localises to the cytoplasm. In Periplaneta americana (American cockroach), this protein is Small ribosomal subunit protein eS1.